The sequence spans 311 residues: Ribonuclease HIII (311 aa).

Positions 95-311 constitute an RNase H type-2 domain; the sequence is MSIVGSDEVG…NTEKAFRLLK (217 aa). Aspartate 101, glutamate 102, and aspartate 206 together coordinate a divalent metal cation.

It belongs to the RNase HII family. RnhC subfamily. Mn(2+) is required as a cofactor. It depends on Mg(2+) as a cofactor.

It localises to the cytoplasm. It catalyses the reaction Endonucleolytic cleavage to 5'-phosphomonoester.. Its function is as follows. Endonuclease that specifically degrades the RNA of RNA-DNA hybrids. The protein is Ribonuclease HIII of Bacillus cereus (strain AH187).